A 759-amino-acid polypeptide reads, in one-letter code: Xaa-Pro dipeptidyl-peptidase (759 aa).

Residues Ser347, Asp467, and His497 each act as charge relay system in the active site.

It belongs to the peptidase S15 family. Homodimer.

The protein resides in the secreted. It catalyses the reaction Hydrolyzes Xaa-Pro-|- bonds to release unblocked, N-terminal dipeptides from substrates including Ala-Pro-|-p-nitroanilide and (sequentially) Tyr-Pro-|-Phe-Pro-|-Gly-Pro-|-Ile.. Removes N-terminal dipeptides sequentially from polypeptides having unsubstituted N-termini provided that the penultimate residue is proline. The protein is Xaa-Pro dipeptidyl-peptidase (pepX) of Streptococcus gordonii.